We begin with the raw amino-acid sequence, 235 residues long: Rab-like protein 3 (235 aa).

Residues 1-235 (MASLDRVKVL…GGNFKSLHYD (235 aa)) form a small GTPase-like region. Residues 16 to 21 (GVGKSS), 148 to 150 (KLD), and 179 to 180 (DC) each bind GTP.

It belongs to the small GTPase superfamily. Rab family. In terms of assembly, homodimer.

Functionally, required for KRAS signaling regulation and modulation of cell proliferation. Regulator of KRAS prenylation, and probably prenylation of other small GTPases. Required for lymphocyte development and function. Not required for myeloid cell development. The sequence is that of Rab-like protein 3 (rabl3) from Xenopus laevis (African clawed frog).